A 241-amino-acid polypeptide reads, in one-letter code: Small ribosomal subunit protein uS2 (241 aa).

Belongs to the universal ribosomal protein uS2 family.

The protein is Small ribosomal subunit protein uS2 of Proteus mirabilis (strain HI4320).